A 324-amino-acid polypeptide reads, in one-letter code: Dolichyl-phosphate beta-glucosyltransferase (324 aa).

Topologically, residues 1–7 (MATLLLQ) are lumenal. A helical membrane pass occupies residues 8–28 (LLGLGVALAAAALILVSIVAF). Residues 29–324 (ITATKMPPCY…WRLKQTRKAS (296 aa)) lie on the Cytoplasmic side of the membrane.

This sequence belongs to the glycosyltransferase 2 family.

The protein localises to the endoplasmic reticulum membrane. It catalyses the reaction a di-trans,poly-cis-dolichyl phosphate + UDP-alpha-D-glucose = a di-trans,poly-cis-dolichyl beta-D-glucosyl phosphate + UDP. It participates in protein modification; protein glycosylation. Its function is as follows. Dolichyl-phosphate beta-glucosyltransferase that operates in the biosynthetic pathway of dolichol-linked oligosaccharides, the glycan precursors employed in protein asparagine (N)-glycosylation. The assembly of dolichol-linked oligosaccharides begins on the cytosolic side of the endoplasmic reticulum membrane and finishes in its lumen. The sequential addition of sugars to dolichol pyrophosphate produces dolichol-linked oligosaccharides containing fourteen sugars, including two GlcNAcs, nine mannoses and three glucoses. Once assembled, the oligosaccharide is transferred from the lipid to nascent proteins by oligosaccharyltransferases. Dolichyl-phosphate beta-glucosyltransferase produces dolichyl beta-D-glucosyl phosphate/Dol-P-Glc, the glucose donor substrate used sequentially by ALG6, ALG8 and ALG10 to add glucose residues on top of the Man(9)GlcNAc(2)-PP-Dol structure. These are the three last steps in the biosynthetic pathway of dolichol-linked oligosaccharides to produce Glc(3)Man(9)GlcNAc(2)-PP-Dol. The enzyme is most probably active on the cytoplasmic side of the endoplasmic reticulum while its product Dol-P-Glc is the substrate for ALG6, ALG8 and ALG11 in the lumen of the endoplasmic reticulum. The polypeptide is Dolichyl-phosphate beta-glucosyltransferase (Mus musculus (Mouse)).